The sequence spans 185 residues: MSSQGFMSKIALPYAEALVESASSASALDQINQDLSLISEILNQSQELKTFFYNPLITTEIKKNVVSSLFTNQVHSLVIRFLLVLIDRRRIALLDVIISKYLELVYQLQSTVIAEVLTPVLLTDVQQSALINKIKDMTNSKTVKLVITIKPMLIAGFIIKIGSKTIDTSLYGRLKHISAYLNAVS.

It belongs to the ATPase delta chain family. As to quaternary structure, F-type ATPases have 2 components, F(1) - the catalytic core - and F(0) - the membrane proton channel. F(1) has five subunits: alpha(3), beta(3), gamma(1), delta(1), epsilon(1). CF(0) has four main subunits: a(1), b(1), b'(1) and c(10-14). The alpha and beta chains form an alternating ring which encloses part of the gamma chain. F(1) is attached to F(0) by a central stalk formed by the gamma and epsilon chains, while a peripheral stalk is formed by the delta, b and b' chains.

Its subcellular location is the plastid. It is found in the chloroplast thylakoid membrane. F(1)F(0) ATP synthase produces ATP from ADP in the presence of a proton or sodium gradient. F-type ATPases consist of two structural domains, F(1) containing the extramembraneous catalytic core and F(0) containing the membrane proton channel, linked together by a central stalk and a peripheral stalk. During catalysis, ATP synthesis in the catalytic domain of F(1) is coupled via a rotary mechanism of the central stalk subunits to proton translocation. Its function is as follows. This protein is part of the stalk that links CF(0) to CF(1). It either transmits conformational changes from CF(0) to CF(1) or is implicated in proton conduction. The protein is ATP synthase subunit delta, chloroplastic of Gracilaria tenuistipitata var. liui (Red alga).